The chain runs to 418 residues: Serine/threonine transporter SstT (418 aa).

8 consecutive transmembrane segments (helical) span residues 21–41 (ILIG…AAIA), 49–69 (FVGA…IASI), 83–103 (ILFL…VVSF), 142–162 (ALLN…GIAL), 190–210 (FAPL…GFGA), 217–237 (LLVV…PLIV), 299–319 (MAGA…TLGI), and 331–351 (VVAA…LLLI).

This sequence belongs to the dicarboxylate/amino acid:cation symporter (DAACS) (TC 2.A.23) family.

The protein localises to the cell inner membrane. The enzyme catalyses L-serine(in) + Na(+)(in) = L-serine(out) + Na(+)(out). The catalysed reaction is L-threonine(in) + Na(+)(in) = L-threonine(out) + Na(+)(out). Involved in the import of serine and threonine into the cell, with the concomitant import of sodium (symport system). This is Serine/threonine transporter SstT from Yersinia pseudotuberculosis serotype O:1b (strain IP 31758).